Consider the following 906-residue polypeptide: Cadherin-2 (906 aa).

The signal sequence occupies residues 1 to 25 (MCRIAGAPRTLLPLLAALLQASVEA). Residues 26–159 (SGEIALCKTG…HNGYLQRQKR (134 aa)) constitute a propeptide that is removed on maturation. Phosphoserine is present on residues Ser96 and Ser135. 5 Cadherin domains span residues 160–267 (DWVI…RPEF), 268–382 (LHQV…PPEF), 383–497 (TAMT…NPYF), 498–603 (APNP…DNAP), and 604–714 (QVLP…DVDR). Topologically, residues 160–724 (DWVIPPINLP…IVGAGLGTGA (565 aa)) are extracellular. Position 170 (Glu170) interacts with Ca(2+). A glycan (N-linked (GlcNAc...) asparagine) is linked at Asn190. Residues Asp226, Glu228, Asp259, Met260, Asn261, Asp262, and Asn263 each coordinate Ca(2+). The N-linked (GlcNAc...) asparagine glycan is linked to Asn273. The Ca(2+) site is built by Asp293, Asp295, and Asn301. Asn325 carries an N-linked (GlcNAc...) asparagine glycan. Asp353 is a binding site for Ca(2+). N-linked (GlcNAc...) asparagine glycans are attached at residues Asn402, Asn572, Asn622, Asn651, and Asn692. The helical transmembrane segment at 725 to 745 (IIAILLCIIILLILVLMFVVW) threads the bilayer. Residues 746–906 (MKRRDKERQA…LAEMYGGGDD (161 aa)) lie on the Cytoplasmic side of the membrane. Over residues 863–880 (SGSTAGSLSSLNSSSSGG) the composition is skewed to low complexity. The disordered stretch occupies residues 863-884 (SGSTAGSLSSLNSSSSGGEQDY).

Homodimer (via extracellular region). Can also form heterodimers with other cadherins (via extracellular region). Dimerization occurs in trans, i.e. with a cadherin chain from another cell. Interacts with CDCP1. Interacts with PCDH8; this complex may also include TAOK2. The interaction with PCDH8 may lead to internalization through TAOK2/p38 MAPK pathway. Identified in a complex containing FGFR4, NCAM1, CDH2, PLCG1, FRS2, SRC, SHC1, GAP43 and CTTN. May interact with OBSCN (via protein kinase domain 2). Interacts with FBXO45. Post-translationally, cleaved by MMP24. Ectodomain cleavage leads to the generation of a soluble 90 kDa N-terminal soluble fragment and a 45 kDa membrane-bound C-terminal fragment 1 (CTF1), which is further cleaved by gamma-secretase into a 35 kDa. Cleavage in neural stem cells by MMP24 affects CDH2-mediated anchorage of neural stem cells to ependymocytes in the adult subependymal zone, leading to modulate neural stem cell quiescence. May be phosphorylated by OBSCN.

Its subcellular location is the cell membrane. It is found in the sarcolemma. The protein localises to the cell junction. The protein resides in the cell surface. It localises to the desmosome. Its subcellular location is the adherens junction. Functionally, calcium-dependent cell adhesion protein; preferentially mediates homotypic cell-cell adhesion by dimerization with a CDH2 chain from another cell. Cadherins may thus contribute to the sorting of heterogeneous cell types. Acts as a regulator of neural stem cells quiescence by mediating anchorage of neural stem cells to ependymocytes in the adult subependymal zone: upon cleavage by MMP24, CDH2-mediated anchorage is affected, leading to modulate neural stem cell quiescence. Plays a role in cell-to-cell junction formation between pancreatic beta cells and neural crest stem (NCS) cells, promoting the formation of processes by NCS cells. Required for proper neurite branching. Required for pre- and postsynaptic organization. CDH2 may be involved in neuronal recognition mechanism. In hippocampal neurons, may regulate dendritic spine density. This is Cadherin-2 (CDH2) from Otolemur garnettii (Small-eared galago).